We begin with the raw amino-acid sequence, 156 residues long: Small ribosomal subunit protein uS7 (156 aa).

This sequence belongs to the universal ribosomal protein uS7 family. As to quaternary structure, part of the 30S ribosomal subunit. Contacts proteins S9 and S11.

Functionally, one of the primary rRNA binding proteins, it binds directly to 16S rRNA where it nucleates assembly of the head domain of the 30S subunit. Is located at the subunit interface close to the decoding center, probably blocks exit of the E-site tRNA. The chain is Small ribosomal subunit protein uS7 from Prochlorococcus marinus (strain MIT 9301).